The sequence spans 1507 residues: MTTVVVHVDSKAELTTLLEQWEKEHGSGQDMVPILTRMSQLIEKETEEYRKGDPDPFDDRHPGRADPECMLGHLLRILFKNDDFMNALVNAYVMTSREPPLNTAACRLLLDIMPGLETAVVFQEKEGIVENLFKWAREADQPLRTYSTGLLGGAMENQDIAANYRDENSQLVAIVLRRLRELQLQEVALRQENKRPSPRKLSSEPLLPLDEEAVDMDYGDMAVDVVDGDQEEASGDMEISFHLDSGHKTSSRVNSTTKPEDGGLKKNKSAKQGDRENFRKAKQKLGFSSSDPDRMFVELSNSSWSEMSPWVIGTNYTLYPMTPAIEQRLILQYLTPLGEYQELLPIFMQLGSRELMMFYIDLKQTNDVLLTFEALKHLASLLLHNKFATEFVAHGGVQKLLEIPRPSMAATGVSMCLYYLSYNQDAMERVCMHPHNVLSDVVNYTLWLMECSHASGCCHATMFFSICFSFRAVLELFDRYDGLRRLVNLISTLEILNLEDQGALLSDDEIFASRQTGKHTCMALRKYFEAHLAIKLEQVKQSLQRTEGGILVHPQPPYKACSYTHEQIVEMMEFLIEYGPAQLYWEPAEVFLKLSCVQLLLQLISIACNWKTYYARNDTVRFALDVLAILTVVPKIQLQLAESVDVLDEAGSTVSTVGISIILGVAEGEFFIHDAEIQKSALQIIINCVCGPDNRISSIGKFISGTPRRKLPQNPKSSEHTLAKMWNVVQSNNGIKVLLSLLSIKMPITDADQIRALACKALVGLSRSSTVRQIISKLPLFSSCQIQQLMKEPVLQDKRSDHVKFCKYAAELIERVSGKPLLIGTDVSLARLQKADVVAQSRISFPEKELLLLIRNHLISKGLGETATVLTKEADLPMTAASHSSAFTPVTAAASPVSLPRTPRIANGIATRLGSHAAVGASAPSAPTAHPQPRPPQGPLALPGPSYAGNSPLIGRISFIRERPSPCNGRKIRVLRQKSDHGAYSQSPAIKKQLDRHLPSPPTLDSIITEYLREQHARCKNPVATCPPFSLFTPHQCPEPKQRRQAPINFTSRLNRRASFPKYGGVDGGCFDRHLIFSRFRPISVFREANEDESGFTCCAFSARERFLMLGTCTGQLKLYNVFSGQEEASYNCHNSAITHLEPSRDGSLLLTSATWSQPLSALWGMKSVFDMKHSFTEDHYVEFSKHSQDRVIGTKGDIAHIYDIQTGNKLLTLFNPDLANNYKRNCATFNPTDDLVLNDGVLWDVRSAQAIHKFDKFNMNISGVFHPNGLEVIINTEIWDLRTFHLLHTVPALDQCRVVFNHTGTVMYGAMLQADDEDDLMEERMKSPFGSSFRTFNATDYKPIATIDVKRNIFDLCTDTKDCYLAVIENQGSMDALNMDTVCRLYEVGRQRLAEDEDEEEDQEEEEQEEEDDDEDDDDTDDLDELDTDQLLEAELEEDDNNENAGEDGDNDFSPSDEELANLLEEGEDGEDEDSDADEEVELILGDTDSSDNSDLEDDIILSLNE.

Residues 141–500 form a protein kinase-like region; it reads QPLRTYSTGL…STLEILNLED (360 aa). A phosphoserine mark is found at Ser-202 and Ser-255. Residues 242–288 form a disordered region; the sequence is HLDSGHKTSSRVNSTTKPEDGGLKKNKSAKQGDRENFRKAKQKLGFS. A Chromo domain is found at 562-593; sequence SYTHEQIVEMMEFLIEYGPAQLYWEPAEVFLK. Lys-701 is subject to N6-acetyllysine. The residue at position 828 (Ser-828) is a Phosphoserine. In terms of domain architecture, LisH spans 846-878; that stretch reads PEKELLLLIRNHLISKGLGETATVLTKEADLPM. Thr-888 bears the Phosphothreonine mark. A phosphoserine mark is found at Ser-895 and Ser-898. Residues 917–947 are disordered; the sequence is AAVGASAPSAPTAHPQPRPPQGPLALPGPSY. Ser-979 and Ser-1000 each carry phosphoserine. WD repeat units lie at residues 1091–1130, 1133–1174, 1176–1213, 1215–1247, and 1248–1290; these read EDES…EEAS, CHNS…DMKH, FTED…KLLT, FNPD…WDVR, and SAQA…LLHT. The segment at 1091 to 1290 is WD repeat-like region; sequence EDESGFTCCA…DLRTFHLLHT (200 aa). 2 consecutive short sequence motifs (DWD box) follow at residues 1242 to 1249 and 1278 to 1285; these read VLWDVRSA and EIWDLRTF. Position 1328 is a phosphoserine (Ser-1328). The segment at 1393–1507 is disordered; sequence RLAEDEDEEE…EDDIILSLNE (115 aa). 2 stretches are compositionally biased toward acidic residues: residues 1396–1483 and 1490–1501; these read EDED…EEVE and DSSDNSDLEDDI. Positions 1418–1507 are interaction with NF2; the sequence is DDDTDDLDEL…EDDIILSLNE (90 aa).

This sequence belongs to the VPRBP/DCAF1 family. Component of the DCX (DDB1-CUL4-X-box) E3 ubiquitin-protein ligase complex, named CUL4A-RBX1-DDB1-DCAF1/VPRBP complex. Interacts with DDB1; the interaction is direct. Also forms a ternary complex with DDA1 and DDB1. Interacts with NF2 (via FERM domain). Component of the EDVP complex, a E3 ligase complex containing DYRK2, EDD/UBR5, DDB1 and DCAF1. Interacts with DYRK2; the interaction is direct. Interacts with RAG1; the interaction is direct. Interacts with LLGL1 and LLGL2. Interacts with histone H3. Interacts with ESR1 and LATS1; probably recruited by LATS1 to promote ESR1 ubiquitination and ubiquitin-mediated proteasomal degradation. Directly interacts with TET1, TET2 and TET3 (via C-terminus). Interacts with CEP78; promoting DCAF1 localization to centrosomes. In terms of assembly, (Microbial infection) Interacts with HIV-1 virus Vpr protein; the interaction is direct. As to quaternary structure, (Microbial infection) Interacts with HIV-2 virus Vpx protein; the interaction is direct and the complex recruits SAMHD1 to promote its ubiquitin-dependent proteasomal degradation. (Microbial infection) Interacts (via C-terminus) with human cytomegalovirus protein UL35; this interaction induces the accumulation of cells in the G2 phase of the cell cycle. In terms of tissue distribution, ubiquitously expressed.

Its subcellular location is the cytoplasm. The protein localises to the nucleus. It localises to the cytoskeleton. The protein resides in the microtubule organizing center. It is found in the centrosome. The catalysed reaction is L-seryl-[protein] + ATP = O-phospho-L-seryl-[protein] + ADP + H(+). It carries out the reaction L-threonyl-[protein] + ATP = O-phospho-L-threonyl-[protein] + ADP + H(+). Its pathway is protein modification; protein ubiquitination. Acts both as a substrate recognition component of E3 ubiquitin-protein ligase complexes and as an atypical serine/threonine-protein kinase, playing key roles in various processes such as cell cycle, telomerase regulation and histone modification. Probable substrate-specific adapter of a DCX (DDB1-CUL4-X-box) E3 ubiquitin-protein ligase complex, named CUL4A-RBX1-DDB1-DCAF1/VPRBP complex, which mediates ubiquitination and proteasome-dependent degradation of proteins such as NF2. Involved in the turnover of methylated proteins: recognizes and binds methylated proteins via its chromo domain, leading to ubiquitination of target proteins by the RBX1-DDB1-DCAF1/VPRBP complex. The CUL4A-RBX1-DDB1-DCAF1/VPRBP complex is also involved in B-cell development: DCAF1 is recruited by RAG1 to ubiquitinate proteins, leading to limit error-prone repair during V(D)J recombination. Also part of the EDVP complex, an E3 ligase complex that mediates ubiquitination of proteins such as TERT, leading to TERT degradation and telomerase inhibition. The EDVP complex also mediates ubiquitination and degradation of CCP110. Also acts as an atypical serine/threonine-protein kinase that specifically mediates phosphorylation of 'Thr-120' of histone H2A (H2AT120ph) in a nucleosomal context, thereby repressing transcription. H2AT120ph is present in the regulatory region of many tumor suppresor genes, down-regulates their transcription and is present at high level in a number of tumors. Involved in JNK-mediated apoptosis during cell competition process via its interaction with LLGL1 and LLGL2. By acting on TET dioxygenses, essential for oocyte maintenance at the primordial follicle stage, hence essential for female fertility. Functionally, (Microbial infection) In case of infection by HIV-1 virus, it is recruited by HIV-1 Vpr in order to hijack the CUL4A-RBX1-DDB1-DCAF1/VPRBP function leading to arrest the cell cycle in G2 phase, and also to protect the viral protein from proteasomal degradation by another E3 ubiquitin ligase. The HIV-1 Vpr protein hijacks the CUL4A-RBX1-DDB1-DCAF1/VPRBP complex to promote ubiquitination and degradation of proteins such as TERT and ZIP/ZGPAT. In terms of biological role, (Microbial infection) In case of infection by HIV-2 virus, it is recruited by HIV-2 Vpx in order to hijack the CUL4A-RBX1-DDB1-DCAF1/VPRBP function leading to enhanced efficiency of macrophage infection and promotion of the replication of cognate primate lentiviruses in cells of monocyte/macrophage lineage. This is DDB1- and CUL4-associated factor 1 from Homo sapiens (Human).